A 1318-amino-acid polypeptide reads, in one-letter code: Major tegument protein (1318 aa).

The protein belongs to the herpesviridae MTP family. Interacts with host DAXX; this interaction disrupts the chromatin remodeling complex ATRX:DAXX and thus allows viral transcription. Interacts with host SMC6; this interaction targets SMC5-SMC6 complex for proteasomal degradation.

The protein resides in the virion tegument. Its subcellular location is the host nucleus. Tegument protein that plays a role in the inhibition of host intrinsic defenses to promote viral early gene activation. Interacts with host DAXX and thereby disrupts the complex between DAXX and ATRX. Suppresses the DAXX-ATRX dependent deposition of histone H3.3 on viral chromatin allowing viral transcription. Targets also host SMC5/6 for proteasomal degradation in a CUL7 and calpain-dependent manner to support nuclear membrane-less replication compartment formation and lytic virus replication. This chain is Major tegument protein, found in Homo sapiens (Human).